A 359-amino-acid polypeptide reads, in one-letter code: CMP-N-acetylneuraminate-poly-alpha-2,8-sialyltransferase (359 aa).

Topologically, residues 1–7 are cytoplasmic; that stretch reads MRSIRKR. The chain crosses the membrane as a helical; Signal-anchor for type II membrane protein span at residues 8 to 20; that stretch reads WTICTISLLLIFY. The Lumenal segment spans residues 21–359; it reads KTKEIARTEE…KLTTGKCMKQ (339 aa). Asparagine 50, asparagine 74, and asparagine 119 each carry an N-linked (GlcNAc...) asparagine glycan. 2 disulfide bridges follow: cysteine 142/cysteine 292 and cysteine 156/cysteine 356. Positions 147 and 170 each coordinate CMP-N-acetyl-beta-neuraminate. N-linked (GlcNAc...) asparagine glycosylation is found at asparagine 204 and asparagine 219. CMP-N-acetyl-beta-neuraminate is bound by residues serine 279, threonine 280, glycine 281, and tryptophan 301. The active-site Proton donor/acceptor is histidine 331.

Belongs to the glycosyltransferase 29 family. In terms of processing, autopolysialylated.

The protein resides in the golgi apparatus membrane. It localises to the secreted. The enzyme catalyses [N-acetyl-alpha-D-neuraminosyl-(2-&gt;8)](n) + CMP-N-acetyl-beta-neuraminate = [N-acetyl-alpha-D-neuraminosyl-(2-&gt;8)](n+1) + CMP + H(+). Its pathway is protein modification; protein glycosylation. Catalyzes the transfer of a sialic acid from a CMP-linked sialic acid donor onto a terminal alpha-2,3-, alpha-2,6-, or alpha-2,8-linked sialic acid of an N-linked glycan protein acceptor through alpha-2,8-linkages. Therefore, participates in polysialic acid synthesis on various sialylated N-acetyllactosaminyl oligosaccharides, including NCAM1 N-glycans, FETUB N-glycans and AHSG. It is noteworthy that alpha-2,3-linked sialic acid is apparently a better acceptor than alpha-2,6-linked sialic acid. This is CMP-N-acetylneuraminate-poly-alpha-2,8-sialyltransferase from Cricetulus griseus (Chinese hamster).